Consider the following 530-residue polypeptide: Histone-arginine methyltransferase CARMER (530 aa).

In terms of domain architecture, SAM-dependent MTase PRMT-type spans 141-450 (ASQYFQFYGY…QSYDVTIDLH (310 aa)). S-adenosyl-L-methionine is bound by residues Gln154, Arg163, Gly187, Glu209, Glu238, and Thr266. Residue Arg501 is modified to Asymmetric dimethylarginine; by autocatalysis.

This sequence belongs to the class I-like SAM-binding methyltransferase superfamily. Protein arginine N-methyltransferase family. In terms of assembly, homodimer. In terms of processing, the dimethylated protein is the major form.

Its subcellular location is the cytoplasm. It localises to the nucleus. The catalysed reaction is L-arginyl-[protein] + 2 S-adenosyl-L-methionine = N(omega),N(omega)-dimethyl-L-arginyl-[protein] + 2 S-adenosyl-L-homocysteine + 2 H(+). Its function is as follows. Methylates (mono- and asymmetric dimethylation) the guanidino nitrogens of arginyl residues in proteins. May methylate histone H3 at 'Arg-17' and activate transcription via chromatin remodeling. This is Histone-arginine methyltransferase CARMER (Art4) from Drosophila simulans (Fruit fly).